A 33-amino-acid chain; its full sequence is Photosystem II reaction center protein T (33 aa).

A helical membrane pass occupies residues 3–23 (ALVYTFLLVSTLGILFFSIFF).

Belongs to the PsbT family. PSII is composed of 1 copy each of membrane proteins PsbA, PsbB, PsbC, PsbD, PsbE, PsbF, PsbH, PsbI, PsbJ, PsbK, PsbL, PsbM, PsbT, PsbY, PsbZ, Psb30/Ycf12, at least 3 peripheral proteins of the oxygen-evolving complex and a large number of cofactors. It forms dimeric complexes.

It is found in the plastid. The protein localises to the chloroplast thylakoid membrane. Found at the monomer-monomer interface of the photosystem II (PS II) dimer, plays a role in assembly and dimerization of PSII. PSII is a light-driven water plastoquinone oxidoreductase, using light energy to abstract electrons from H(2)O, generating a proton gradient subsequently used for ATP formation. In Pelargonium hortorum (Common geranium), this protein is Photosystem II reaction center protein T.